The chain runs to 38 residues: Large ribosomal subunit protein bL36 (38 aa).

The protein belongs to the bacterial ribosomal protein bL36 family.

The sequence is that of Large ribosomal subunit protein bL36 from Chlorobaculum parvum (strain DSM 263 / NCIMB 8327) (Chlorobium vibrioforme subsp. thiosulfatophilum).